A 778-amino-acid chain; its full sequence is Dapper homolog 1 (778 aa).

Basic and acidic residues-rich tracts occupy residues 1 to 10 (MKPDAAREPE) and 18 to 40 (AEAE…TRER). A disordered region spans residues 1–40 (MKPDAAREPEPLSPGRGAEAEGRWRERGEADTERQRTRER). Positions 85 to 149 (DAAQRSRLEE…SEEHLETDSR (65 aa)) are required for self-association. Residues 85–149 (DAAQRSRLEE…SEEHLETDSR (65 aa)) adopt a coiled-coil conformation. Residues 125–134 (LDKQISDLRL) carry the Nuclear export signal motif. Disordered regions lie at residues 305–324 (KTHP…DPTK), 359–386 (GGIT…QLES), 397–416 (AGAA…KAAS), 428–468 (ESMK…SQKN), 544–616 (EKPR…HKRT), and 694–721 (NCFG…SEES). Residues 375 to 386 (RSKDSKTDQLES) show a composition bias toward basic and acidic residues. The span at 432-443 (ESNQASAVSPKT) shows a compositional bias: polar residues. The Bipartite nuclear localization signal motif lies at 551–564 (KKCRFPDDSDTNKK). A compositionally biased stretch (basic and acidic residues) spans 554-563 (RFPDDSDTNK). Residues 564–574 (KFRKTSAKGRR) are compositionally biased toward basic residues. A compositionally biased stretch (polar residues) spans 694 to 704 (NCFGDSESSVS). The PDZ-binding motif lies at 768-778 (RSGSLKLMTTV). Phosphoserine; by PKA is present on Ser-769.

It belongs to the dapper family. As to quaternary structure, can form homodimers and heterodimers with DACT2 or DACT3. Interacts with CSNK1D, PKA catalytic subunit, PKC-type kinase, CSNK2A1, CSNK2B, DVL1, DLV2, DVAL3, VANGL1, VANGL2, CTNND1 and HDAC1. Interacts with GSK3B; the interaction is indicative for an association of DACT1 with the beta-catenin destruction complex. Interacts with GSK3A. Interacts with YWHAB; the interaction is enhanced by PKA phosphorylating DACT1 at Ser-769. Interacts with CTNNB1. As to expression, expressed in multiple tissues including brain, heart, kidney, liver and testis.

The protein localises to the cytoplasm. It localises to the nucleus. The protein resides in the synapse. Its function is as follows. Involved in regulation of intracellular signaling pathways during development. Specifically thought to play a role in canonical and/or non-canonical Wnt signaling pathways through interaction with DSH (Dishevelled) family proteins. The activation/inhibition of Wnt signaling may depend on the phosphorylation status. Proposed to regulate the degradation of CTNNB1/beta-catenin, thereby modulating the transcriptional activation of target genes of the Wnt signaling pathway. Its function in stabilizing CTNNB1 may involve inhibition of GSK3B activity. Promotes the membrane localization of CTNNB1. The cytoplasmic form can induce DVL2 degradation via a lysosome-dependent mechanism; the function is inhibited by PKA-induced binding to 14-3-3 proteins, such as YWHAB. Seems to be involved in morphogenesis at the primitive streak by regulating VANGL2 and DVL2; the function seems to be independent of canonical Wnt signaling and rather involves the non-canonical Wnt/planar cell polarity (PCP) pathway. The nuclear form may prevent the formation of LEF1:CTNNB1 complex and recruit HDAC1 to LEF1 at target gene promoters to repress transcription thus antagonizing Wnt signaling. May be involved in positive regulation of fat cell differentiation. During neuronal differentiation may be involved in excitatory synapse organization, and dendrite formation and establishment of spines. This is Dapper homolog 1 (Dact1) from Mus musculus (Mouse).